The following is a 499-amino-acid chain: Thioredoxin reductase 1, cytoplasmic (499 aa).

FAD contacts are provided by residues 22 to 23 (SG), 42 to 43 (DF), 58 to 59 (TC), and 63 to 67 (GCIPK). An intrachain disulfide couples C59 to C64. K68 carries the post-translational modification N6-succinyllysine. Y131 carries the post-translational modification Phosphotyrosine. Residues 131 to 132 (YG) and T161 contribute to the FAD site. NADP(+) is bound by residues R166, 198-204 (ASYVALE), 221-222 (RS), R226, 226-228 (RGF), 292-293 (GR), and K315. FAD is bound at residue Y200. Residues D334, 341–343 (ELT), and H472 each bind FAD. Position 341 (E341) interacts with NADP(+). The active-site Proton acceptor is the H472. The cysteinyl-selenocysteine (Cys-Sec) cross-link spans 497–498 (CU). Position 498 (U498) is a non-standard amino acid, selenocysteine.

This sequence belongs to the class-I pyridine nucleotide-disulfide oxidoreductase family. In terms of assembly, homodimer. FAD is required as a cofactor. Post-translationally, ISGylated.

It localises to the cytoplasm. The catalysed reaction is [thioredoxin]-dithiol + NADP(+) = [thioredoxin]-disulfide + NADPH + H(+). It carries out the reaction H2O2 + NADPH + H(+) = NADP(+) + 2 H2O. Reduces disulfideprotein thioredoxin (Trx) to its dithiol-containing form. Homodimeric flavoprotein involved in the regulation of cellular redox reactions, growth and differentiation. Contains a selenocysteine residue at the C-terminal active site that is essential for catalysis. Also has reductase activity on hydrogen peroxide (H2O2). The chain is Thioredoxin reductase 1, cytoplasmic (TXNRD1) from Bos taurus (Bovine).